Consider the following 663-residue polypeptide: UvrABC system protein B (663 aa).

Residues 30–417 form the Helicase ATP-binding domain; the sequence is DGIKAGKRHQ…TDKMVEQIIR (388 aa). Residue 43–50 coordinates ATP; it reads GATGTGKT. The Beta-hairpin motif lies at 96 to 119; that stretch reads YYDYYQPEAYVPSTDTFIEKDASI. The Helicase C-terminal domain maps to 434 to 600; it reads QIDDLLSEIQ…TINKKIHDLI (167 aa). The 36-residue stretch at 627–662 folds into the UVR domain; sequence QKTIDNIEKEMKQAAKDLDFEKATELRDMLFELKAE.

It belongs to the UvrB family. Forms a heterotetramer with UvrA during the search for lesions. Interacts with UvrC in an incision complex.

It is found in the cytoplasm. In terms of biological role, the UvrABC repair system catalyzes the recognition and processing of DNA lesions. A damage recognition complex composed of 2 UvrA and 2 UvrB subunits scans DNA for abnormalities. Upon binding of the UvrA(2)B(2) complex to a putative damaged site, the DNA wraps around one UvrB monomer. DNA wrap is dependent on ATP binding by UvrB and probably causes local melting of the DNA helix, facilitating insertion of UvrB beta-hairpin between the DNA strands. Then UvrB probes one DNA strand for the presence of a lesion. If a lesion is found the UvrA subunits dissociate and the UvrB-DNA preincision complex is formed. This complex is subsequently bound by UvrC and the second UvrB is released. If no lesion is found, the DNA wraps around the other UvrB subunit that will check the other stand for damage. This is UvrABC system protein B from Staphylococcus aureus (strain Mu50 / ATCC 700699).